Here is a 628-residue protein sequence, read N- to C-terminus: Patulin synthase (628 aa).

The signal sequence occupies residues 1–19 (MRLTSGIFHAAIAVAAVGA). Asn49 carries an N-linked (GlcNAc...) asparagine glycan. FAD contacts are provided by residues 61-62 (TA) and 82-83 (EA). A glycan (N-linked (GlcNAc...) asparagine) is linked at Asn93. 148–151 (NYMA) contributes to the FAD binding site. N-linked (GlcNAc...) asparagine glycans are attached at residues Asn198, Asn261, Asn283, Asn429, Asn486, and Asn526. The active-site Proton acceptor is His564. The N-linked (GlcNAc...) asparagine glycan is linked to Asn575. Residues Ala598 and 609-610 (PQ) each bind FAD.

The protein belongs to the GMC oxidoreductase family. Requires FAD as cofactor.

Its subcellular location is the cytoplasm. The protein resides in the cell cortex. It is found in the vacuole. The protein localises to the secreted. It localises to the cell wall. The enzyme catalyses (E)-ascladiol + A = patulin + AH2. It participates in mycotoxin biosynthesis; patulin biosynthesis. Functionally, patulin synthase; part of the gene cluster that mediates the biosynthesis of patulin, an acetate-derived tetraketide mycotoxin produced by several fungal species that shows antimicrobial properties against several bacteria. PatE catalyzes the last step of the pathway which is the conversion of E-ascladiol to patulin. The pathway begins with the synthesis of 6-methylsalicylic acid by the polyketide synthase (PKS) patK via condensation of acetate and malonate units. The 6-methylsalicylic acid decarboxylase patG then catalyzes the decarboxylation of 6-methylsalicylic acid to yield m-cresol (also known as 3-methylphenol). These first reactions occur in the cytosol. The intermediate m-cresol is then transported into the endoplasmic reticulum where the cytochrome P450 monooxygenase patH converts it to m-hydroxybenzyl alcohol, which is further converted to gentisyl alcohol by the cytochrome P450 monooxygenase patI. The oxidoreductases patJ and patO further convert gentisyl alcohol to isoepoxydon in the vacuole. PatN catalyzes then the transformation of isoepoxydon into phyllostine. The cluster protein patF is responsible for the conversion from phyllostine to neopatulin whereas the alcohol dehydrogenase patD converts neopatulin to E-ascladiol. The steps between isoepoxydon and E-ascladiol occur in the cytosol, and E-ascladiol is probably secreted to the extracellular space by one of the cluster-specific transporters patC or patM. Finally, the secreted patulin synthase patE catalyzes the conversion of E-ascladiol to patulin. The protein is Patulin synthase of Penicillium expansum (Blue mold rot fungus).